An 817-amino-acid chain; its full sequence is Anaphase-promoting complex subunit 4 (817 aa).

Position 469 is a phosphotyrosine (Y469). Phosphoserine occurs at positions 757 and 758. A Glycyl lysine isopeptide (Lys-Gly) (interchain with G-Cter in SUMO2) cross-link involves residue K772. S777 and S779 each carry phosphoserine. A Glycyl lysine isopeptide (Lys-Gly) (interchain with G-Cter in SUMO2) cross-link involves residue K798.

The protein belongs to the APC4 family. As to quaternary structure, the mammalian APC/C is composed at least of 14 distinct subunits ANAPC1, ANAPC2, CDC27/APC3, ANAPC4, ANAPC5, CDC16/APC6, ANAPC7, CDC23/APC8, ANAPC10, ANAPC11, CDC26/APC12, ANAPC13, ANAPC15 and ANAPC16 that assemble into a complex of at least 19 chains with a combined molecular mass of around 1.2 MDa; APC/C interacts with FZR1 and FBXO5. In the context of the APC/C complex, directly interacts with UBE2S.

It localises to the nucleus. Its pathway is protein modification; protein ubiquitination. In terms of biological role, component of the anaphase promoting complex/cyclosome (APC/C), a cell cycle-regulated E3 ubiquitin ligase that controls progression through mitosis and the G1 phase of the cell cycle. The APC/C complex acts by mediating ubiquitination and subsequent degradation of target proteins: it mainly mediates the formation of 'Lys-11'-linked polyubiquitin chains and, to a lower extent, the formation of 'Lys-48'- and 'Lys-63'-linked polyubiquitin chains. The APC/C complex catalyzes assembly of branched 'Lys-11'-/'Lys-48'-linked branched ubiquitin chains on target proteins. The chain is Anaphase-promoting complex subunit 4 (ANAPC4) from Pongo abelii (Sumatran orangutan).